The primary structure comprises 352 residues: Ribosomal RNA large subunit methyltransferase M (352 aa).

S-adenosyl-L-methionine is bound by residues Ser184, 217-220 (APGG), Asp236, Asp256, and Asp272. Lys301 functions as the Proton acceptor in the catalytic mechanism.

The protein belongs to the class I-like SAM-binding methyltransferase superfamily. RNA methyltransferase RlmE family. RlmM subfamily. In terms of assembly, monomer.

It is found in the cytoplasm. The catalysed reaction is cytidine(2498) in 23S rRNA + S-adenosyl-L-methionine = 2'-O-methylcytidine(2498) in 23S rRNA + S-adenosyl-L-homocysteine + H(+). Functionally, catalyzes the 2'-O-methylation at nucleotide C2498 in 23S rRNA. This chain is Ribosomal RNA large subunit methyltransferase M, found in Pseudomonas aeruginosa (strain UCBPP-PA14).